Consider the following 142-residue polypeptide: Type II secretion system core protein G (142 aa).

The propeptide at M1–G8 is leader sequence. F9 carries the post-translational modification N-methylphenylalanine. Residues F9–V29 traverse the membrane as a helical segment. Residues S121–N142 are disordered.

Belongs to the GSP G family. In terms of assembly, type II secretion system is composed of four main components: the outer membrane complex, the inner membrane complex, the cytoplasmic secretion ATPase and the periplasm-spanning pseudopilus. Forms homomultimers. Interacts with pseudopilin tip ternary complex made of XcpX, XcpU, XcpV and XcpW. Interacts with PilA. In terms of processing, cleaved by the prepilin peptidase. Post-translationally, methylated by prepilin peptidase at the amino group of the N-terminal phenylalanine once the leader sequence is cleaved.

It is found in the cell inner membrane. Its function is as follows. Core component of the type II secretion system required for the energy-dependent secretion of extracellular factors such as proteases and toxins from the periplasm. Pseudopilin (pilin-like) protein that polymerizes to form the pseudopilus. Further polymerization triggers pseudopilus growth. Type II pseudopilus confers increased bacterial adhesive capabilities. This Pseudomonas aeruginosa (strain ATCC 15692 / DSM 22644 / CIP 104116 / JCM 14847 / LMG 12228 / 1C / PRS 101 / PAO1) protein is Type II secretion system core protein G (xcpT).